The sequence spans 440 residues: Chromosomal replication initiator protein DnaA (440 aa).

The tract at residues Met-1–Asn-74 is domain I, interacts with DnaA modulators. The segment at Asn-74–Thr-99 is domain II. The domain III, AAA+ region stretch occupies residues Ile-100–Ala-316. ATP is bound by residues Gly-146, Gly-148, Lys-149, and Thr-150. The segment at Thr-317–Ser-440 is domain IV, binds dsDNA.

This sequence belongs to the DnaA family. In terms of assembly, oligomerizes as a right-handed, spiral filament on DNA at oriC.

The protein resides in the cytoplasm. Functionally, plays an essential role in the initiation and regulation of chromosomal replication. ATP-DnaA binds to the origin of replication (oriC) to initiate formation of the DNA replication initiation complex once per cell cycle. Binds the DnaA box (a 9 base pair repeat at the origin) and separates the double-stranded (ds)DNA. Forms a right-handed helical filament on oriC DNA; dsDNA binds to the exterior of the filament while single-stranded (ss)DNA is stabiized in the filament's interior. The ATP-DnaA-oriC complex binds and stabilizes one strand of the AT-rich DNA unwinding element (DUE), permitting loading of DNA polymerase. After initiation quickly degrades to an ADP-DnaA complex that is not apt for DNA replication. Binds acidic phospholipids. This is Chromosomal replication initiator protein DnaA from Campylobacter jejuni subsp. jejuni serotype O:2 (strain ATCC 700819 / NCTC 11168).